A 391-amino-acid chain; its full sequence is Putative gustatory receptor 36b (391 aa).

Residues 1–4 are Cytoplasmic-facing; that stretch reads MVDW. The chain crosses the membrane as a helical span at residues 5–25; the sequence is VVLLLKAVHIYCYLIGLSNFE. The Extracellular segment spans residues 26–39; it reads FDCRTGRVFKSRRC. Residues 40-60 form a helical membrane-spanning segment; the sequence is TIYAFMANIFILITIIYNFTA. Topologically, residues 61-74 are cytoplasmic; that stretch reads HGDTNLLFQSANKL. A helical transmembrane segment spans residues 75–95; that stretch reads HEYVIIIMSGLKIVAGLITVL. Residues 96–127 lie on the Extracellular side of the membrane; the sequence is NRWLQRGQMMQLVKDVIRLYMINPQLKSMIRW. The chain crosses the membrane as a helical span at residues 128–148; the sequence is GILLKAFISFAIELLQVTLSV. The Cytoplasmic segment spans residues 149 to 165; that stretch reads DALDRQGTAEMMGLLVK. The chain crosses the membrane as a helical span at residues 166–186; it reads LCVSFIMNLAISQHFLVILLI. Over 187–284 the chain is Extracellular; sequence RAQYRIMNAK…YKYGPHNLKL (98 aa). The chain crosses the membrane as a helical span at residues 285-305; that stretch reads SAKTSIIVCILITLFYLDALV. Topologically, residues 306 to 363 are cytoplasmic; the sequence is NCNNMLRVLDHHKDFLGLLEERTVFASSLDIRLEESFESLQLQLARNPLKINVMGMFP. Residues 364–384 traverse the membrane as a helical segment; the sequence is ITRGSTAAMCASVIVNSIFLI. Over 385–391 the chain is Extracellular; sequence QFDMEFF.

Belongs to the insect chemoreceptor superfamily. Gustatory receptor (GR) family. Gr22e subfamily. As to expression, expressed in neurons of the terminal external chemosensory organ of larvae.

It localises to the cell membrane. Functionally, probable gustatory receptor which mediates acceptance or avoidance behavior, depending on its substrates. The sequence is that of Putative gustatory receptor 36b (Gr36b) from Drosophila melanogaster (Fruit fly).